The primary structure comprises 262 residues: uncharacterized protein (262 aa).

Residues 5–223 (IKVENLTKYF…MAYIEYLDNG (219 aa)) enclose the ABC transporter domain. Position 37–44 (37–44 (GHNGAGKT)) interacts with ATP.

It belongs to the ABC transporter superfamily.

This is an uncharacterized protein from Methanocaldococcus jannaschii (strain ATCC 43067 / DSM 2661 / JAL-1 / JCM 10045 / NBRC 100440) (Methanococcus jannaschii).